Consider the following 551-residue polypeptide: MRARQQLLASLQAIVKDMGLSWPEKATLEPPRDKSFGDLAANIALVISKDAGVPPRELASRLAGALRDSDPAIASVDIAGPGFLNVTYSPDFWRETVLHVEAAGDRYGATAVGAGRKAQVEYVSANPTGPLHIGHGRGAALGDCLARVLRFAGYDVTTEYYINDAGRQMRLLGLSVWLRALELSGRPFTLPEDFYRGDYIKDIAAEMLAKDPGLVDLPEAEGQDRCFEYAMNSIMDGIKQDLADFRVEHQVWFSELSLVREGAVEKTFERLKAAGLAFEQDGALWFRTTTLGDDKDRVLRKSDGTLTYFASDIAYHDNKYDRGFDLVVDIWGADHHGYVPRMRAAVAALGKRPEQFDVILVQLVNLLQNGEQIAMSTRAGQFETLHDVVREVGADAARFMFLSRKSDSHLDFDLELVKQRSMDNPVYYVQYAHARVCAVLRKAAERAIVLPARLDAAALAPLTLPEELDLLRLVDRMPDTLSAAAEGLAPHHVSFYLMEVAGALHSYYAKVPVLNAADAETIVARLALLRAVGQAVANGLNLLGVEAPEAM.

Positions 125–135 match the 'HIGH' region motif; sequence ANPTGPLHIGH.

This sequence belongs to the class-I aminoacyl-tRNA synthetase family. As to quaternary structure, monomer.

The protein localises to the cytoplasm. It catalyses the reaction tRNA(Arg) + L-arginine + ATP = L-arginyl-tRNA(Arg) + AMP + diphosphate. The sequence is that of Arginine--tRNA ligase from Nitratidesulfovibrio vulgaris (strain DSM 19637 / Miyazaki F) (Desulfovibrio vulgaris).